Here is a 347-residue protein sequence, read N- to C-terminus: MLKEESNESGTWARACDTCRSAACTVYCEADSAYLCTTCDARVHAANRVASRHERVRVCQSCESAPAAFLCKADAASLCTACDAEIHSANPLARRHQRVPILPLSANSCSSMAPSETDADNDEDDREVASWLLPNPGKNIGNQNNGFLFGVEYLDLVDYSSSMDNQFEDNQYTHYQRSFGGDGVVPLQVEESTSHLQQSQQNFQLGINYGFSSGAHYNNNSLKDLNHSASVSSMDISVVPESTASDITVQHPRTTKETIDQLSGPPTQVVQQLTPMEREARVLRYREKKKTRKFDKTIRYASRKAYAEIRPRIKGRFAKRIETEAEAEEIFSTSLMSETGYGIVPSF.

Positions 16, 19, 39, 44, 59, 62, 82, and 87 each coordinate Zn(2+). The segment at 16-58 (CDTCRSAACTVYCEADSAYLCTTCDARVHAANRVASRHERVRV) adopts a B box-type 1; atypical zinc-finger fold. A B box-type 2; atypical zinc finger spans residues 59–101 (CQSCESAPAAFLCKADAASLCTACDAEIHSANPLARRHQRVPI). Positions 278-320 (REARVLRYREKKKTRKFDKTIRYASRKAYAEIRPRIKGRFAKR) constitute a CCT domain.

The protein belongs to the CONSTANS family. Highly expressed in leaves. Expressed at lower levels in stems, flowers and siliques. Not detected in roots.

It localises to the nucleus. Putative transcription factor. Does not affect flowering time. The protein is Zinc finger protein CONSTANS-LIKE 2 (COL2) of Arabidopsis thaliana (Mouse-ear cress).